The primary structure comprises 602 residues: Protein indeterminate-domain 5, chloroplastic (602 aa).

Composition is skewed to low complexity over residues 1-10 (MAASSSSAAS) and 21-30 (HLLPPNSSAA). Residues 1-50 (MAASSSSAASFFGVRQDDQSHLLPPNSSAAAPPPPPPHHQAPLPPLEAPP) constitute a chloroplast transit peptide. The tract at residues 1–65 (MAASSSSAAS…NQPRTPNSDA (65 aa)) is disordered. A compositionally biased stretch (pro residues) spans 31 to 48 (APPPPPPHHQAPLPPLEA). T60 is subject to Phosphothreonine. S71 carries the post-translational modification Phosphoserine. 2 consecutive C2H2-type zinc fingers follow at residues 81-103 (FICEVCNKGFQREQNLQLHRRGH) and 122-152 (YLCPEPSCVHHDPSRALGDLTGIKKHYYRKH). The segment at 157 to 180 (WKCDKCSKRYAVQSDWKAHSKTCG) adopts a C2H2-type 2; degenerate zinc-finger fold. Zn(2+) contacts are provided by C159, C162, H175, C179, C186, C188, H201, and C205. The segment at 184-207 (YRCDCGTLFSRRDSFITHRAFCDA) adopts a CCHC-type 2; atypical zinc-finger fold. Residues 194–206 (RRDSFITHRAFCD) are SHR-binding. Disordered stretches follow at residues 443-467 (KAAQMGSTSSNNNNGSNTNNNNNAS) and 537-602 (KSMS…HASF). Low complexity-rich tracts occupy residues 448–467 (GSTSSNNNNGSNTNNNNNAS), 546–560 (QQQQQQQQQQQQQQQ), and 570–579 (SSSDSADRSS).

In terms of assembly, binds to RGA and SCL3 competitively. In terms of tissue distribution, highly expressed in leaf tissues.

Its subcellular location is the plastid. The protein localises to the chloroplast. Transcription factor acting as a positive regulator of the starch synthase SS4. Controls chloroplast development and starch granule formation. Binds DNA via its zinc fingers. Recognizes and binds to SCL3 promoter sequence 5'-AGACAA-3' to promote its expression when in complex with RGA. The protein is Protein indeterminate-domain 5, chloroplastic of Arabidopsis thaliana (Mouse-ear cress).